Reading from the N-terminus, the 315-residue chain is Archaeosortase A (315 aa).

A run of 7 helical transmembrane segments spans residues 12-32 (VIPY…AGVA), 47-67 (AGAW…FAFV), 74-94 (TVLI…VFAG), 173-193 (VVFE…IAAV), 204-224 (IALS…FIAL), 227-247 (GYQW…FGLT), and 260-280 (VLAQ…IARW). Cysteine 177 functions as the Acyl-thioester intermediate in the catalytic mechanism. Arginine 218 acts as the Proton donor in catalysis.

Belongs to the exosortase/archaeosortase family. Archaeosortase A subfamily.

It localises to the cell membrane. Functionally, transpeptidase that recognizes and modifies its substrate by proteolytic cleavage of a sorting signal. Following cleavage, a covalent intermediate is formed via a thioester bond between the archaeosortase and its substrate, which is then transferred and covalently attached to the cell membrane. This is Archaeosortase A from Natronomonas pharaonis (strain ATCC 35678 / DSM 2160 / CIP 103997 / JCM 8858 / NBRC 14720 / NCIMB 2260 / Gabara) (Halobacterium pharaonis).